Consider the following 434-residue polypeptide: Alpha-enolase (434 aa).

Residue serine 40 coordinates Mg(2+). Substrate-binding residues include histidine 158 and glutamate 167. Glutamate 210 (proton donor) is an active-site residue. Aspartate 245, glutamate 293, and aspartate 318 together coordinate Mg(2+). Residues glutamate 293 and aspartate 318 each coordinate substrate. Lysine 343 serves as the catalytic Proton acceptor. Residues 370–373 (SHRS) and lysine 394 contribute to the substrate site.

The protein belongs to the enolase family. As to quaternary structure, homodimer. It depends on Mg(2+) as a cofactor.

It localises to the cytoplasm. The catalysed reaction is (2R)-2-phosphoglycerate = phosphoenolpyruvate + H2O. The protein operates within carbohydrate degradation; glycolysis; pyruvate from D-glyceraldehyde 3-phosphate: step 4/5. The polypeptide is Alpha-enolase (Sceloporus undulatus (Eastern fence lizard)).